Reading from the N-terminus, the 247-residue chain is Carboxy-S-adenosyl-L-methionine synthase (247 aa).

Residues tyrosine 39, 64–66 (GCS), 89–90 (DN), 117–118 (DI), asparagine 132, and arginine 199 each bind S-adenosyl-L-methionine.

Belongs to the class I-like SAM-binding methyltransferase superfamily. Cx-SAM synthase family. Homodimer.

It catalyses the reaction prephenate + S-adenosyl-L-methionine = carboxy-S-adenosyl-L-methionine + 3-phenylpyruvate + H2O. Catalyzes the conversion of S-adenosyl-L-methionine (SAM) to carboxy-S-adenosyl-L-methionine (Cx-SAM). This chain is Carboxy-S-adenosyl-L-methionine synthase, found in Escherichia coli O17:K52:H18 (strain UMN026 / ExPEC).